The chain runs to 1073 residues: Guanylyl cyclase C (1073 aa).

The first 23 residues, 1–23, serve as a signal peptide directing secretion; that stretch reads MKTPLLALALWSLLLQLGLTFWP. Over 24-433 the chain is Extracellular; that stretch reads SSVSQNCHNG…IPGRGPQILM (410 aa). Residues Asn32, Asn43, Asn79, Asn195, Asn284, Asn307, and Asn402 are each glycosylated (N-linked (GlcNAc...) asparagine). The helical transmembrane segment at 434–454 threads the bilayer; the sequence is IAVFTLTGTIVLLLLIALLVL. The Cytoplasmic segment spans residues 455–1073; it reads RKYKREYALR…NTTDNESTHF (619 aa). The region spanning 489-749 is the Protein kinase domain; the sequence is LKIDDDRRRD…KIENTLAKIF (261 aa). Positions 824 to 954 constitute a Guanylate cyclase domain; it reads TIYFSDIVGF…DTVNTASRME (131 aa).

This sequence belongs to the adenylyl cyclase class-4/guanylyl cyclase family. Homotrimer. Interacts via its C-terminal region with NHERF4. Interacts with the lectin chaperone VIP36. Glycosylation at Asn-79 is required for interaction with VIP36 while glycosylation at Asn-402 modulates ligand-mediated GC-C activation.

Its subcellular location is the cell membrane. It is found in the endoplasmic reticulum membrane. It carries out the reaction GTP = 3',5'-cyclic GMP + diphosphate. Its function is as follows. Guanylyl cyclase that catalyzes synthesis of cyclic GMP (cGMP) from GTP. The sequence is that of Guanylyl cyclase C (GUCY2C) from Sus scrofa (Pig).